A 1074-amino-acid polypeptide reads, in one-letter code: DNA-directed RNA polymerase subunit beta (1074 aa).

This sequence belongs to the RNA polymerase beta chain family. In terms of assembly, in plastids the minimal PEP RNA polymerase catalytic core is composed of four subunits: alpha, beta, beta', and beta''. When a (nuclear-encoded) sigma factor is associated with the core the holoenzyme is formed, which can initiate transcription.

It is found in the plastid. It localises to the chloroplast. It catalyses the reaction RNA(n) + a ribonucleoside 5'-triphosphate = RNA(n+1) + diphosphate. In terms of biological role, DNA-dependent RNA polymerase catalyzes the transcription of DNA into RNA using the four ribonucleoside triphosphates as substrates. The sequence is that of DNA-directed RNA polymerase subunit beta from Chara vulgaris (Common stonewort).